A 148-amino-acid chain; its full sequence is Large ribosomal subunit protein bL9 (148 aa).

Belongs to the bacterial ribosomal protein bL9 family.

Binds to the 23S rRNA. The polypeptide is Large ribosomal subunit protein bL9 (Staphylococcus epidermidis (strain ATCC 35984 / DSM 28319 / BCRC 17069 / CCUG 31568 / BM 3577 / RP62A)).